The following is a 189-amino-acid chain: Adenylate kinase homolog MTH_1663 (189 aa).

G12 to T20 provides a ligand contact to ATP.

The protein belongs to the archaeal adenylate kinase family.

The sequence is that of Adenylate kinase homolog MTH_1663 from Methanothermobacter thermautotrophicus (strain ATCC 29096 / DSM 1053 / JCM 10044 / NBRC 100330 / Delta H) (Methanobacterium thermoautotrophicum).